The chain runs to 357 residues: MTQTPETALKRTPLHAAHLRAGARMVPFGGWDMPVQYSGLKAEHQAVRESAGVFDVSHMGEFRIQGEGALAFLQHVTPNDVSKLRPGRAQYNWLPNDRGGLVDDIYIYMVGENEYLMVVNASNIDKDWAHLQTLAAGFGVTLTNESDRWALLAVQGPKAAEVLQPHVDVDLGSKKKNAYFPARLFGFNVHLARTGYTGEDGFEVFIDASEAETVWDKLMAIGVTPAGLGARDTLRLEAGFPLYGHEFADDIHPLSSHYTWVVKDKPFYGREALQQPAQQKLIGLKLDKVPVREGYPVLQSGQVVGHVTSGTSSPTLGHPIALALVQAGAADATDFEVEVRGKAHPATRTDVPFYKAP.

Belongs to the GcvT family. In terms of assembly, the glycine cleavage system is composed of four proteins: P, T, L and H.

It catalyses the reaction N(6)-[(R)-S(8)-aminomethyldihydrolipoyl]-L-lysyl-[protein] + (6S)-5,6,7,8-tetrahydrofolate = N(6)-[(R)-dihydrolipoyl]-L-lysyl-[protein] + (6R)-5,10-methylene-5,6,7,8-tetrahydrofolate + NH4(+). In terms of biological role, the glycine cleavage system catalyzes the degradation of glycine. This chain is Aminomethyltransferase, found in Deinococcus deserti (strain DSM 17065 / CIP 109153 / LMG 22923 / VCD115).